A 485-amino-acid chain; its full sequence is Glycogen synthase (485 aa).

Residue K20 participates in ADP-alpha-D-glucose binding.

This sequence belongs to the glycosyltransferase 1 family. Bacterial/plant glycogen synthase subfamily.

It catalyses the reaction [(1-&gt;4)-alpha-D-glucosyl](n) + ADP-alpha-D-glucose = [(1-&gt;4)-alpha-D-glucosyl](n+1) + ADP + H(+). The protein operates within glycan biosynthesis; glycogen biosynthesis. Functionally, synthesizes alpha-1,4-glucan chains using ADP-glucose. In Vibrio vulnificus (strain CMCP6), this protein is Glycogen synthase.